We begin with the raw amino-acid sequence, 315 residues long: Fructose-1,6-bisphosphatase class 1 (315 aa).

4 residues coordinate Mg(2+): Glu-90, Asp-111, Leu-113, and Asp-114. Substrate is bound by residues 114-117 (DGSS), Tyr-222, and Lys-253. Glu-259 is a binding site for Mg(2+).

It belongs to the FBPase class 1 family. As to quaternary structure, homotetramer. The cofactor is Mg(2+).

The protein resides in the cytoplasm. The catalysed reaction is beta-D-fructose 1,6-bisphosphate + H2O = beta-D-fructose 6-phosphate + phosphate. Its pathway is carbohydrate biosynthesis; gluconeogenesis. The chain is Fructose-1,6-bisphosphatase class 1 from Trichlorobacter lovleyi (strain ATCC BAA-1151 / DSM 17278 / SZ) (Geobacter lovleyi).